Consider the following 622-residue polypeptide: Low affinity potassium transport system protein Kup (622 aa).

12 helical membrane passes run 9–29, 49–69, 103–123, 137–157, 165–185, 213–233, 247–267, 276–296, 337–357, 363–383, 396–416, and 419–439; these read LPAI…TSPL, VFGF…IKYL, VIMG…TPAI, PQLD…LFMI, VGKL…GLGL, VSFI…ALYA, WFTV…ALLL, PFFL…AALA, IYIP…IVSF, LAAA…ILST, FVAL…TANL, and LLSG…VMTT.

The protein belongs to the HAK/KUP transporter (TC 2.A.72) family.

Its subcellular location is the cell inner membrane. It catalyses the reaction K(+)(in) + H(+)(in) = K(+)(out) + H(+)(out). Its function is as follows. Responsible for the low-affinity transport of potassium into the cell. Likely operates as a K(+):H(+) symporter. This chain is Low affinity potassium transport system protein Kup, found in Escherichia coli O157:H7.